We begin with the raw amino-acid sequence, 514 residues long: 2,3-bisphosphoglycerate-independent phosphoglycerate mutase (514 aa).

2 residues coordinate Mn(2+): Asp-13 and Ser-63. Residue Ser-63 is the Phosphoserine intermediate of the active site. Residues His-124, 154–155 (RD), Arg-186, Arg-192, 258–261 (RADR), and Lys-332 contribute to the substrate site. Residues Asp-399, His-403, Asp-440, His-441, and His-459 each coordinate Mn(2+).

It belongs to the BPG-independent phosphoglycerate mutase family. Monomer. The cofactor is Mn(2+).

The enzyme catalyses (2R)-2-phosphoglycerate = (2R)-3-phosphoglycerate. The protein operates within carbohydrate degradation; glycolysis; pyruvate from D-glyceraldehyde 3-phosphate: step 3/5. In terms of biological role, catalyzes the interconversion of 2-phosphoglycerate and 3-phosphoglycerate. The protein is 2,3-bisphosphoglycerate-independent phosphoglycerate mutase of Legionella pneumophila subsp. pneumophila (strain Philadelphia 1 / ATCC 33152 / DSM 7513).